The following is a 534-amino-acid chain: H(+)/hexose cotransporter 1 (534 aa).

Over Met-1–Gly-21 the chain is Cytoplasmic. A helical transmembrane segment spans residues Gly-22–Gly-42. The Extracellular segment spans residues Tyr-43–Gln-87. Residues Leu-88–Thr-108 traverse the membrane as a helical segment. Over Arg-109–Lys-114 the chain is Cytoplasmic. The chain crosses the membrane as a helical span at residues Val-115 to Gln-135. Residues Asp-136–Arg-144 lie on the Extracellular side of the membrane. A helical transmembrane segment spans residues Val-145 to Val-165. The Cytoplasmic portion of the chain corresponds to Ala-166–Met-173. The chain crosses the membrane as a helical span at residues Leu-174–Tyr-194. At Ala-195 to Arg-204 the chain is on the extracellular side. A helical transmembrane segment spans residues Leu-205 to Pro-225. The Cytoplasmic segment spans residues Glu-226–Gln-299. Residues Phe-300–Ser-322 traverse the membrane as a helical segment. Over Ala-323–Thr-328 the chain is Extracellular. A helical transmembrane segment spans residues Val-329–Phe-349. Residues Gly-350 to Arg-352 are Cytoplasmic-facing. Residues Phe-353–Leu-373 form a helical membrane-spanning segment. Topologically, residues Ala-374–Lys-387 are extracellular. Residues Ala-388–Trp-408 traverse the membrane as a helical segment. Over Gly-409 to Val-433 the chain is Cytoplasmic. Residues Val-434–Met-454 form a helical membrane-spanning segment. The Extracellular segment spans residues Glu-455 to Tyr-456. Residues Gly-457–Leu-477 form a helical membrane-spanning segment. Residues Pro-478–Lys-534 lie on the Cytoplasmic side of the membrane.

Belongs to the major facilitator superfamily. Sugar transporter (TC 2.A.1.1) family.

The protein resides in the membrane. In terms of biological role, active uptake of hexoses. The protein is H(+)/hexose cotransporter 1 (HUP1) of Parachlorella kessleri (Green alga).